Reading from the N-terminus, the 471-residue chain is Tryptophanase (471 aa).

N6-acetyllysine occurs at positions 5, 115, and 156. Residue Lys270 is modified to N6-(pyridoxal phosphate)lysine. Lys450 carries the post-translational modification N6-acetyllysine.

It belongs to the beta-eliminating lyase family. As to quaternary structure, homotetramer. Requires pyridoxal 5'-phosphate as cofactor.

It carries out the reaction L-tryptophan + H2O = indole + pyruvate + NH4(+). Its pathway is amino-acid degradation; L-tryptophan degradation via pyruvate pathway; indole and pyruvate from L-tryptophan: step 1/1. The protein is Tryptophanase of Escherichia fergusonii (strain ATCC 35469 / DSM 13698 / CCUG 18766 / IAM 14443 / JCM 21226 / LMG 7866 / NBRC 102419 / NCTC 12128 / CDC 0568-73).